The chain runs to 216 residues: ATP-dependent Clp protease proteolytic subunit (216 aa).

Ser120 acts as the Nucleophile in catalysis. His145 is an active-site residue.

Belongs to the peptidase S14 family. As to quaternary structure, fourteen ClpP subunits assemble into 2 heptameric rings which stack back to back to give a disk-like structure with a central cavity, resembling the structure of eukaryotic proteasomes.

The protein resides in the cytoplasm. The catalysed reaction is Hydrolysis of proteins to small peptides in the presence of ATP and magnesium. alpha-casein is the usual test substrate. In the absence of ATP, only oligopeptides shorter than five residues are hydrolyzed (such as succinyl-Leu-Tyr-|-NHMec, and Leu-Tyr-Leu-|-Tyr-Trp, in which cleavage of the -Tyr-|-Leu- and -Tyr-|-Trp bonds also occurs).. Cleaves peptides in various proteins in a process that requires ATP hydrolysis. Has a chymotrypsin-like activity. Plays a major role in the degradation of misfolded proteins. The polypeptide is ATP-dependent Clp protease proteolytic subunit (Cupriavidus metallidurans (strain ATCC 43123 / DSM 2839 / NBRC 102507 / CH34) (Ralstonia metallidurans)).